The sequence spans 85 residues: Putative membrane protein insertion efficiency factor (85 aa).

This sequence belongs to the UPF0161 family.

It localises to the cell inner membrane. Could be involved in insertion of integral membrane proteins into the membrane. This Escherichia coli O6:H1 (strain CFT073 / ATCC 700928 / UPEC) protein is Putative membrane protein insertion efficiency factor.